The chain runs to 216 residues: Peroxiredoxin (216 aa).

Residues isoleucine 2–isoleucine 158 form the Thioredoxin domain. Cysteine 46 (cysteine sulfenic acid (-SOH) intermediate) is an active-site residue. Arginine 121 lines the substrate pocket. The cysteines at positions 205 and 211 are disulfide-linked.

It belongs to the peroxiredoxin family. Prx6 subfamily. Homodecamer. Pentamer of dimers that assemble into a ring structure.

The protein resides in the cytoplasm. The enzyme catalyses a hydroperoxide + [thioredoxin]-dithiol = an alcohol + [thioredoxin]-disulfide + H2O. Functionally, thiol-specific peroxidase that catalyzes the reduction of hydrogen peroxide and organic hydroperoxides to water and alcohols, respectively. Plays a role in cell protection against oxidative stress by detoxifying peroxides. The sequence is that of Peroxiredoxin from Pyrococcus furiosus (strain ATCC 43587 / DSM 3638 / JCM 8422 / Vc1).